Reading from the N-terminus, the 203-residue chain is MSRYTGPRLKIIRRFGGLDLPGLTRKRPKNTNPPGMHGAERKKKSEYAIRLEEKQKVRFNYGLSERQMIRYMRKARRSKGSTGLALLQMLEMRLDCIVFRLGMAPTIPAARQLVSHGHIEVNGQKVTIPSYGCKVGDVITVKNKESSRKLVAAYAEYPGLFLPDYLEFDKEKLRGRIKELPPREQICAPVNELLVVEFYSRKL.

Positions 20–44 (LPGLTRKRPKNTNPPGMHGAERKKK) are disordered. The 64-residue stretch at 92-155 (MRLDCIVFRL…SSRKLVAAYA (64 aa)) folds into the S4 RNA-binding domain.

Belongs to the universal ribosomal protein uS4 family. As to quaternary structure, part of the 30S ribosomal subunit. Contacts protein S5. The interaction surface between S4 and S5 is involved in control of translational fidelity.

Functionally, one of the primary rRNA binding proteins, it binds directly to 16S rRNA where it nucleates assembly of the body of the 30S subunit. With S5 and S12 plays an important role in translational accuracy. This chain is Small ribosomal subunit protein uS4, found in Synechococcus sp. (strain JA-2-3B'a(2-13)) (Cyanobacteria bacterium Yellowstone B-Prime).